The chain runs to 340 residues: UDP-N-acetylglucosamine--N-acetylmuramyl-(pentapeptide) pyrophosphoryl-undecaprenol N-acetylglucosamine transferase (340 aa).

UDP-N-acetyl-alpha-D-glucosamine is bound by residues 10–12, asparagine 110, serine 171, and glutamine 272; that span reads TGG.

The protein belongs to the glycosyltransferase 28 family. MurG subfamily.

The protein localises to the cell membrane. It carries out the reaction di-trans,octa-cis-undecaprenyl diphospho-N-acetyl-alpha-D-muramoyl-L-alanyl-D-glutamyl-meso-2,6-diaminopimeloyl-D-alanyl-D-alanine + UDP-N-acetyl-alpha-D-glucosamine = di-trans,octa-cis-undecaprenyl diphospho-[N-acetyl-alpha-D-glucosaminyl-(1-&gt;4)]-N-acetyl-alpha-D-muramoyl-L-alanyl-D-glutamyl-meso-2,6-diaminopimeloyl-D-alanyl-D-alanine + UDP + H(+). The protein operates within cell wall biogenesis; peptidoglycan biosynthesis. Cell wall formation. Catalyzes the transfer of a GlcNAc subunit on undecaprenyl-pyrophosphoryl-MurNAc-pentapeptide (lipid intermediate I) to form undecaprenyl-pyrophosphoryl-MurNAc-(pentapeptide)GlcNAc (lipid intermediate II). The protein is UDP-N-acetylglucosamine--N-acetylmuramyl-(pentapeptide) pyrophosphoryl-undecaprenol N-acetylglucosamine transferase of Wolbachia pipientis subsp. Culex pipiens (strain wPip).